Reading from the N-terminus, the 162-residue chain is Caveolin-2 (162 aa).

At 1–86 (MGLETEKADV…FEISKYVIYK (86 aa)) the chain is on the cytoplasmic side. At Y19 the chain carries Phosphotyrosine; by SRC. 2 positions are modified to phosphoserine: S20 and S23. A Phosphotyrosine; by SRC modification is found at Y27. S36 carries the phosphoserine modification. The segment at residues 87–107 (FLTLFLAIPLAFAAGILFATL) is an intramembrane region (helical). At 108–162 (SCLHIWIIMPFVKTCLMVLPSVQTIWKSITDVVIAPLCTSVGRSFSSVSLQLSHD) the chain is on the cytoplasmic side.

Belongs to the caveolin family. Monomer or homodimer. Interacts with CAV1; the interaction forms a stable heterooligomeric complex that is required for targeting to lipid rafts and for caveolae formation. Tyrosine phosphorylated forms do not form heterooligomers with the Tyr-19-phosphorylated form existing as a monomer or dimer, and the Tyr-27-form as a monomer only. Interacts (tyrosine phosphorylated form) with the SH2 domain-containing proteins, RASA1, NCK1 and SRC. Interacts (tyrosine phosphorylated form) with INSR, the interaction (Tyr-27-phosphorylated form) is increased on insulin stimulation. Interacts (Tyr-19 phosphorylated form) with MAPK1 (phosphorylated form); the interaction, promoted by insulin, leads to nuclear location and MAPK1 activation. Interacts with STAT3; the interaction is increased on insulin-induced tyrosine phosphorylation leading to STAT activation. Phosphorylated on serine and tyrosine residues. CAV1 promotes phosphorylation on Ser-23 which then targets the complex to the plasma membrane, lipid rafts and caveolae. Phosphorylation on Ser-36 appears to modulate mitosis in endothelial cells. Phosphorylation on both Tyr-19 and Tyr-27 is required for insulin-induced 'Ser-727' phosphorylation of STAT3 and its activation. Phosphorylation on Tyr-19 is required for insulin-induced phosphorylation of MAPK1 and DNA binding of STAT3. Tyrosine phosphorylation is induced by both EGF and insulin (By. similarity).

The protein resides in the nucleus. It localises to the cytoplasm. The protein localises to the golgi apparatus membrane. Its subcellular location is the cell membrane. It is found in the membrane. The protein resides in the caveola. Its function is as follows. May act as a scaffolding protein within caveolar membranes. Interacts directly with G-protein alpha subunits and can functionally regulate their activity. Acts as an accessory protein in conjunction with CAV1 in targeting to lipid rafts and driving caveolae formation. The Ser-36 phosphorylated form has a role in modulating mitosis in endothelial cells. Positive regulator of cellular mitogenesis of the MAPK signaling pathway. Required for the insulin-stimulated nuclear translocation and activation of MAPK1 and STAT3, and the subsequent regulation of cell cycle progression. In Neofelis nebulosa (Clouded leopard), this protein is Caveolin-2 (CAV2).